Reading from the N-terminus, the 361-residue chain is Cysteine-rich with EGF-like domain protein 2-B (361 aa).

An N-terminal signal peptide occupies residues 1 to 24; that stretch reads MNGSRAWRLAAWLLLCLSCSAAVA. Residues 134–176 form the EGF-like 1 domain; sequence DCLACLGGSERPCHGNGFCSGDGTRSGDGSCRCKAEYTGSFCL. Intrachain disulfides connect cysteine 138–cysteine 152, cysteine 146–cysteine 164, and cysteine 166–cysteine 175. Asparagine 188 carries N-linked (GlcNAc...) asparagine glycosylation. FU repeat units follow at residues 191–238 and 251–298; these read HAVC…EESP and SFLC…SEKL. Residues 288–329 enclose the EGF-like 2; calcium-binding domain; it reads DVDECDASEKLCLRENEVCLNTAGSYKCTCSEGFEDKEGNCV. 3 disulfide bridges follow: cysteine 292–cysteine 306, cysteine 299–cysteine 315, and cysteine 317–cysteine 328. Residues 339–361 form a disordered region; that stretch reads ITEGETGTPASDTNILNTAHEDL. Polar residues predominate over residues 346–355; it reads TPASDTNILN.

The protein belongs to the CRELD family.

The protein resides in the secreted. Its subcellular location is the endoplasmic reticulum. Its function is as follows. Possible role in neuronal acetylcholine receptor transport. The polypeptide is Cysteine-rich with EGF-like domain protein 2-B (creld2-b) (Xenopus laevis (African clawed frog)).